The primary structure comprises 375 residues: D-apiose dehydrogenase (375 aa).

29–30 lines the NAD(+) pocket; that stretch reads FF. 4 residues coordinate Mg(2+): W38, R39, I41, and A44. NAD(+) is bound by residues D51, S93, 111–112, N140, and 179–181; these read QK and QPY. Residue K112 participates in substrate binding. Positions 179, 192, 196, and 246 each coordinate substrate.

Belongs to the Gfo/Idh/MocA family.

The enzyme catalyses D-apiofuranose + NAD(+) = D-apionolactone + NADH + H(+). The protein operates within carbohydrate metabolism. Involved in catabolism of D-apiose. Catalyzes oxidation of D-apiose to D-apionolactone. The chain is D-apiose dehydrogenase from Paraburkholderia graminis (strain ATCC 700544 / DSM 17151 / LMG 18924 / NCIMB 13744 / C4D1M).